Reading from the N-terminus, the 347-residue chain is NADH-ubiquinone oxidoreductase chain 2 (347 aa).

A run of 11 helical transmembrane segments spans residues 1–21 (MNPI…MIVM), 25–45 (HWLM…PILM), 60–80 (FLTQ…NLMF), 89–109 (IFNP…LGLS), 111–131 (FHFW…LILL), 149–169 (INLD…GWGG), 178–198 (IMAY…TYNP), 201–221 (TALN…LFML), 242–262 (SLIL…GFIP), 274–294 (DSII…YFYM), and 323–343 (MNFL…TPIM).

It belongs to the complex I subunit 2 family. Core subunit of respiratory chain NADH dehydrogenase (Complex I) which is composed of 45 different subunits. Interacts with TMEM242.

Its subcellular location is the mitochondrion inner membrane. It catalyses the reaction a ubiquinone + NADH + 5 H(+)(in) = a ubiquinol + NAD(+) + 4 H(+)(out). Its function is as follows. Core subunit of the mitochondrial membrane respiratory chain NADH dehydrogenase (Complex I) which catalyzes electron transfer from NADH through the respiratory chain, using ubiquinone as an electron acceptor. Essential for the catalytic activity and assembly of complex I. This Ceratotherium simum (White rhinoceros) protein is NADH-ubiquinone oxidoreductase chain 2.